The primary structure comprises 474 residues: Glutathione synthetase (474 aa).

Residue alanine 2 is modified to N-acetylalanine. Arginine 125 contacts substrate. An ATP-binding site is contributed by glutamate 144. Mg(2+) contacts are provided by glutamate 144 and asparagine 146. Residues 148-151, 214-216, glutamine 220, and 267-270 each bind substrate; these read VSAS, ERN, and RDGY. Residues lysine 305, 364–373, tyrosine 375, and 398–401 each bind ATP; these read KPQREGGGNN and MEKI. Residue glutamate 368 coordinates Mg(2+). Serine 415 carries the phosphoserine modification. Residue glutamate 425 participates in ATP binding. Arginine 450 provides a ligand contact to substrate. Residues lysine 452 and aspartate 458 each coordinate ATP. 461–462 is a substrate binding site; sequence VA.

Belongs to the eukaryotic GSH synthase family. In terms of assembly, homodimer. Mg(2+) is required as a cofactor.

It carries out the reaction gamma-L-glutamyl-L-cysteine + glycine + ATP = glutathione + ADP + phosphate + H(+). The catalysed reaction is gamma-L-glutamyl-(2S)-2-aminobutanoate + glycine + ATP = ophthalmate + ADP + phosphate + H(+). The protein operates within sulfur metabolism; glutathione biosynthesis; glutathione from L-cysteine and L-glutamate: step 2/2. Its function is as follows. Catalyzes the production of glutathione from gamma-glutamylcysteine and glycine in an ATP-dependent manner. Glutathione (gamma-glutamylcysteinylglycine, GSH) is the most abundant intracellular thiol in living aerobic cells and is required for numerous processes including the protection of cells against oxidative damage, amino acid transport, the detoxification of foreign compounds, the maintenance of protein sulfhydryl groups in a reduced state and acts as a cofactor for a number of enzymes. Participates in ophthalmate biosynthesis in hepatocytes. This Bos taurus (Bovine) protein is Glutathione synthetase.